A 469-amino-acid chain; its full sequence is 6-phospho-beta-galactosidase (469 aa).

Residues Q19, H116, N159, E160, and N297 each contribute to the D-galactose 6-phosphate site. The active-site Proton donor is E160. The active-site Nucleophile is E375. S428, W429, K435, and Y437 together coordinate D-galactose 6-phosphate.

This sequence belongs to the glycosyl hydrolase 1 family.

It carries out the reaction a 6-phospho-beta-D-galactoside + H2O = D-galactose 6-phosphate + an alcohol. Its pathway is carbohydrate metabolism; lactose degradation; D-galactose 6-phosphate and beta-D-glucose from lactose 6-phosphate: step 1/1. This chain is 6-phospho-beta-galactosidase, found in Streptococcus equi subsp. zooepidemicus (strain MGCS10565).